A 159-amino-acid polypeptide reads, in one-letter code: Cyclic pyranopterin monophosphate synthase (159 aa).

Substrate is bound by residues 75 to 77 (LCH) and 113 to 114 (ME). Asp-128 is a catalytic residue.

The protein belongs to the MoaC family. Homohexamer; trimer of dimers.

The enzyme catalyses (8S)-3',8-cyclo-7,8-dihydroguanosine 5'-triphosphate = cyclic pyranopterin phosphate + diphosphate. The protein operates within cofactor biosynthesis; molybdopterin biosynthesis. Its function is as follows. Catalyzes the conversion of (8S)-3',8-cyclo-7,8-dihydroguanosine 5'-triphosphate to cyclic pyranopterin monophosphate (cPMP). The chain is Cyclic pyranopterin monophosphate synthase from Yersinia pseudotuberculosis serotype O:1b (strain IP 31758).